The chain runs to 207 residues: ADP-ribosylation factor (207 aa).

G2 carries the N-myristoyl glycine lipid modification. GTP contacts are provided by residues 32–39 (GLDGAGKT), 75–79 (DIGGQ), and 133–136 (NKID).

It belongs to the small GTPase superfamily. Arf family.

Its subcellular location is the golgi apparatus. Functionally, GTP-binding protein involved in protein trafficking; may modulate vesicle budding and uncoating within the Golgi apparatus. The chain is ADP-ribosylation factor (ARF-1) from Encephalitozoon cuniculi (strain GB-M1) (Microsporidian parasite).